Reading from the N-terminus, the 43-residue chain is Bacteriocin leucocin-C (43 aa).

An intrachain disulfide couples C9 to C14.

Its subcellular location is the secreted. Inhibits a wide spectrum of lactic acid bacteria. The sequence is that of Bacteriocin leucocin-C from Leuconostoc mesenteroides.